The chain runs to 264 residues: Thymidylate synthase (264 aa).

R21 provides a ligand contact to dUMP. H51 contacts (6R)-5,10-methylene-5,6,7,8-tetrahydrofolate. 126-127 (RR) lines the dUMP pocket. The active-site Nucleophile is C146. DUMP is bound by residues 166–169 (RSAD), N177, and 207–209 (HLY). D169 provides a ligand contact to (6R)-5,10-methylene-5,6,7,8-tetrahydrofolate. A263 is a (6R)-5,10-methylene-5,6,7,8-tetrahydrofolate binding site.

Belongs to the thymidylate synthase family. Bacterial-type ThyA subfamily. As to quaternary structure, homodimer.

The protein resides in the cytoplasm. The catalysed reaction is dUMP + (6R)-5,10-methylene-5,6,7,8-tetrahydrofolate = 7,8-dihydrofolate + dTMP. It functions in the pathway pyrimidine metabolism; dTTP biosynthesis. Functionally, catalyzes the reductive methylation of 2'-deoxyuridine-5'-monophosphate (dUMP) to 2'-deoxythymidine-5'-monophosphate (dTMP) while utilizing 5,10-methylenetetrahydrofolate (mTHF) as the methyl donor and reductant in the reaction, yielding dihydrofolate (DHF) as a by-product. This enzymatic reaction provides an intracellular de novo source of dTMP, an essential precursor for DNA biosynthesis. The sequence is that of Thymidylate synthase from Nitrosomonas europaea (strain ATCC 19718 / CIP 103999 / KCTC 2705 / NBRC 14298).